The sequence spans 123 residues: Small ribosomal subunit protein uS12 (123 aa).

Aspartate 89 carries the post-translational modification 3-methylthioaspartic acid. A disordered region spans residues 102-123 (LDTSGVQDRRQRRSKYGAKRPK). Over residues 111-123 (RQRRSKYGAKRPK) the composition is skewed to basic residues.

This sequence belongs to the universal ribosomal protein uS12 family. Part of the 30S ribosomal subunit. Contacts proteins S8 and S17. May interact with IF1 in the 30S initiation complex.

With S4 and S5 plays an important role in translational accuracy. In terms of biological role, interacts with and stabilizes bases of the 16S rRNA that are involved in tRNA selection in the A site and with the mRNA backbone. Located at the interface of the 30S and 50S subunits, it traverses the body of the 30S subunit contacting proteins on the other side and probably holding the rRNA structure together. The combined cluster of proteins S8, S12 and S17 appears to hold together the shoulder and platform of the 30S subunit. This chain is Small ribosomal subunit protein uS12, found in Lawsonia intracellularis (strain PHE/MN1-00).